Consider the following 407-residue polypeptide: Inhibin beta B chain (407 aa).

The first 28 residues, 1–28 (MDGLPGRALGAACLLLLAAGWLGPEAWG), serve as a signal peptide directing secretion. Residues 27–60 (WGSPTPPPSPAAPPPPPPPGALGGSQDTCTSCGG) form a disordered region. A propeptide spanning residues 29–292 (SPTPPPSPAA…VDSRHRIRKR (264 aa)) is cleaved from the precursor. Pro residues predominate over residues 30-46 (PTPPPSPAAPPPPPPPG). Asparagine 93 is a glycosylation site (N-linked (GlcNAc...) asparagine). 4 cysteine pairs are disulfide-bonded: cysteine 296-cysteine 304, cysteine 303-cysteine 372, cysteine 332-cysteine 404, and cysteine 336-cysteine 406.

This sequence belongs to the TGF-beta family. Dimeric, linked by one or more disulfide bonds. Inhibin B is a dimer of alpha and beta-B. Activin B is a homodimer of beta-B. Activin AB is a dimer of beta-A and beta-B. Interacts with FST and FSTL3.

The protein resides in the secreted. In terms of biological role, inhibins and activins inhibit and activate, respectively, the secretion of follitropin by the pituitary gland. Inhibins/activins are involved in regulating a number of diverse functions such as hypothalamic and pituitary hormone secretion, gonadal hormone secretion, germ cell development and maturation, erythroid differentiation, insulin secretion, nerve cell survival, embryonic axial development or bone growth, depending on their subunit composition. Inhibins appear to oppose the functions of activins. Activin B is a dimer of alpha and beta-B that plays a role in several essential biological processes including embryonic development, stem cell maintenance and differentiation, haematopoiesis, cell proliferation and wound healing. Signals through type I receptor ACVR1C, abundantly expressed in pancreatic beta cells, and type II receptors like ACVR2A. Upon ligand binding, these receptors phosphorylate intracellular signaling mediators SMAD2 and SMAD3, which form a complex with SMAD4, translocate to the nucleus, and regulate gene expression. Plays a crucial role in the induction of hepcidin by inflammation through activation of ACVR1C and subsequent phosphorylation of SMAD1/5/8. Regulates adipocyte lipid metabolism by decreasing non-esterified fatty acids and glycerol release and increases intracellular triglyceride content. Stimulates wound healing by promoting cell migration and hair follicle regeneration through the JNK and ERK signaling pathways downstream of RHOA. Its function is as follows. Inhibin B is a dimer of alpha and beta-B that plays a crucial role in the regulation of the reproductive system by inhibiting the secretion of follicle-stimulating hormone (FSH) from the anterior pituitary gland. Thereby, maintains reproductive homeostasis in both males and females. Acts as a more potent suppressor of FSH release than inhibin A. Functions as competitive receptor antagonist binding activin type II receptors with high affinity in the presence of the TGF-beta type III coreceptor/TGFBR3L. The polypeptide is Inhibin beta B chain (INHBB) (Sus scrofa (Pig)).